A 902-amino-acid polypeptide reads, in one-letter code: Respiratory burst oxidase homolog protein A (902 aa).

Topologically, residues methionine 1–arginine 344 are cytoplasmic. Disordered stretches follow at residues lysine 63–arginine 87 and alanine 107–lysine 130. Over residues tyrosine 74–arginine 87 the composition is skewed to polar residues. Residues alanine 107 to arginine 116 show a composition bias toward low complexity. EF-hand-like stretches follow at residues threonine 163–serine 173 and glutamate 198–glutamate 209. EF-hand domains lie at aspartate 221–alanine 256 and glutamine 265–glutamine 300. Positions 234, 236, 238, 240, and 245 each coordinate Ca(2+). Phosphoserine is present on residues serine 311 and serine 315. The helical transmembrane segment at valine 345–glutamate 365 threads the bilayer. Residues tyrosine 366 to cysteine 380 are Extracellular-facing. Residues isoleucine 381–cysteine 401 form a helical membrane-spanning segment. The Ferric oxidoreductase domain maps to lysine 383–valine 540. The Cytoplasmic segment spans residues arginine 402 to lysine 428. Residues valine 429 to aspartate 449 form a helical membrane-spanning segment. Over phenylalanine 450 to glycine 484 the chain is Extracellular. The helical transmembrane segment at valine 485–phenylalanine 505 threads the bilayer. Residues arginine 506 to histidine 529 are Cytoplasmic-facing. Residues histidine 530 to isoleucine 550 traverse the membrane as a helical segment. The Extracellular segment spans residues glutamate 551 to valine 709. An FAD-binding FR-type domain is found at isoleucine 575 to aspartate 703. The chain crosses the membrane as a helical span at residues valine 710–isoleucine 730. Residues asparagine 731–phenylalanine 902 lie on the Cytoplasmic side of the membrane. The interval glutamate 738–lysine 760 is disordered.

The protein belongs to the RBOH (TC 5.B.1.3) family. In terms of assembly, monomer and homodimer.

It is found in the membrane. Its function is as follows. Calcium-dependent NADPH oxidase that generates superoxide. This Arabidopsis thaliana (Mouse-ear cress) protein is Respiratory burst oxidase homolog protein A (RBOHA).